The primary structure comprises 297 residues: Proline iminopeptidase (297 aa).

An AB hydrolase-1 domain is found at 26–131; it reads VLLLHGGPAM…GLLVSNMMAS (106 aa). Catalysis depends on S103, which acts as the Nucleophile. Residue D243 is part of the active site. Catalysis depends on H270, which acts as the Proton donor.

This sequence belongs to the peptidase S33 family. As to quaternary structure, monomer.

The catalysed reaction is Release of N-terminal proline from a peptide.. Functionally, releases the N-terminal proline from various substrates. This Flavobacterium johnsoniae (strain ATCC 17061 / DSM 2064 / JCM 8514 / BCRC 14874 / CCUG 350202 / NBRC 14942 / NCIMB 11054 / UW101) (Cytophaga johnsonae) protein is Proline iminopeptidase (fpaP).